Consider the following 832-residue polypeptide: Putative pentatricopeptide repeat-containing protein At5g08310, mitochondrial (832 aa).

Residues 1–27 (MAFSRIALLCQRFSRQQQQRQLLHRPL) constitute a mitochondrion transit peptide. PPR repeat units lie at residues 105–139 (DMYAYNAMASILSRARQNASLKALVVDVLNSRCFM), 140–174 (SPGAFGFFIRCLGNAGLVDEASSVFDRVREMGLCV), 176–212 (NAYTYNCLLEAISKSNSSSVELVEARLKEMRDCGFHF), 213–247 (DKFTLTPVLQVYCNTGKSERALSVFNEILSRGWLD), 252–281 (TILVVSFCKWGQVDKAFELIEMLEERDIRL), 282–316 (NYKTYCVLIHGFVKESRIDKAFQLFEKMRRMGMNA), 317–351 (DIALYDVLIGGLCKHKDLEMALSLYLEIKRSGIPP), 352–383 (DRGILGKLLCSFSEESELSRITEVIIGDIDKK), 385–415 (VMLLYKSLFEGFIRNDLVHEAYSFIQNLMGN), 438–472 (DSDSLSIVINCLVKANKVDMAVTLLHDIVQNGLIP), 473–507 (GPMMYNNIIEGMCKEGRSEESLKLLGEMKDAGVEP), 508–542 (SQFTLNCIYGCLAERCDFVGALDLLKKMRFYGFEP), 543–577 (WIKHTTFLVKKLCENGRAVDACKYLDDVAGEGFLG), 578–612 (HMVASTAAIDGLIKNEGVDRGLELFRDICANGHCP), 613–647 (DVIAYHVLIKALCKACRTMEADILFNEMVSKGLKP), 648–682 (TVATYNSMIDGWCKEGEIDRGLSCIVRMYEDEKNP), 683–717 (DVITYTSLIHGLCASGRPSEAIFRWNEMKGKDCYP), 718–752 (NRITFMALIQGLCKCGWSGEALVYFREMEEKEMEP), and 753–787 (DSAVYLSLVSSFLSSENINAGFGIFREMVHKGRFP).

It belongs to the PPR family. P subfamily.

It localises to the mitochondrion. This chain is Putative pentatricopeptide repeat-containing protein At5g08310, mitochondrial, found in Arabidopsis thaliana (Mouse-ear cress).